Here is a 400-residue protein sequence, read N- to C-terminus: Mu-type opioid receptor (400 aa).

The Extracellular segment spans residues 1–68; it reads MDSSAAPTNA…CPPTGSPSMI (68 aa). Residues asparagine 9, asparagine 12, asparagine 33, asparagine 40, and asparagine 48 are each glycosylated (N-linked (GlcNAc...) asparagine). Residues 69–93 form a helical membrane-spanning segment; that stretch reads TAITIMALYSIVCVVGLFGNFLVMY. Over 94-106 the chain is Cytoplasmic; the sequence is VIVRYTKMKTATN. Residues 107–131 traverse the membrane as a helical segment; that stretch reads IYIFNLALADALATSTLPFQSVNYL. The Extracellular portion of the chain corresponds to 132 to 142; sequence MGTWPFGTILC. A disulfide bridge connects residues cysteine 142 and cysteine 219. The chain crosses the membrane as a helical span at residues 143–165; it reads KIVISIDYYNMFTSIFTLCTMSV. Residues 166-185 are Cytoplasmic-facing; the sequence is DRYIAVCHPVKALDFRTPRN. Tyrosine 168 carries the phosphotyrosine modification. A helical membrane pass occupies residues 186–207; sequence AKIINVCNWILSSAIGLPVMFM. Residues 208–230 lie on the Extracellular side of the membrane; the sequence is ATTKYRQGSIDCTLTFSHPTWYW. Residues 231–255 traverse the membrane as a helical segment; sequence ENLLKICVFIFAFIMPVLIITVCYG. Residues 256–279 are Cytoplasmic-facing; that stretch reads LMILRLKSVRMLSGSKEKDRNLRR. A helical membrane pass occupies residues 280 to 306; that stretch reads ITRMVLVVVAVFIVCWTPIHIYVIIKA. The Extracellular segment spans residues 307–314; that stretch reads LVTIPETT. The chain crosses the membrane as a helical span at residues 315-338; that stretch reads FQTVSWHFCIALGYTNSCLNPVLY. An NPxxY; plays a role in stabilizing the activated conformation of the receptor motif is present at residues 334-338; it reads NPVLY. The Cytoplasmic portion of the chain corresponds to 339-400; it reads AFLDENFKRC…NLEAETAPLP (62 aa). The S-palmitoyl cysteine moiety is linked to residue cysteine 353. Phosphoserine is present on serine 365. Phosphothreonine is present on threonine 372. The residue at position 377 (serine 377) is a Phosphoserine. The residue at position 396 (threonine 396) is a Phosphothreonine.

It belongs to the G-protein coupled receptor 1 family. Forms homooligomers and heterooligomers with other GPCRs, such as OPRD1, OPRK1, OPRL1, NPFFR2, ADRA2A, SSTR2, CNR1 and CCR5 (probably in dimeric forms). Interacts with heterotrimeric G proteins; interaction with a heterotrimeric complex containing GNAI1, GNB1 and GNG2 stabilizes the active conformation of the receptor and increases its affinity for endomorphin-2, the synthetic opioid peptide DAMGO and for morphinan agonists. Interacts with PPL; the interaction disrupts agonist-mediated G-protein activation. Interacts (via C-terminus) with DNAJB4 (via C-terminus). Interacts with calmodulin; the interaction inhibits the constitutive activity of OPRM1; it abolishes basal and attenuates agonist-stimulated G-protein coupling. Interacts with FLNA, PLD2, RANBP9 and WLS and GPM6A. Interacts with RTP4. Interacts with SYP and GNAS. Interacts with RGS9, RGS17, RGS20, RGS4, PPP1R9B and HINT1. Post-translationally, phosphorylated. Differentially phosphorylated in basal and agonist-induced conditions. Agonist-mediated phosphorylation modulates receptor internalization. Phosphorylated by GRK2 in a agonist-dependent manner. Phosphorylation at Tyr-168 requires receptor activation, is dependent on non-receptor protein tyrosine kinase Src and results in a decrease in agonist efficacy by reducing G-protein coupling efficiency. Phosphorylated on tyrosine residues; the phosphorylation is involved in agonist-induced G-protein-independent receptor down-regulation. Phosphorylation at Ser-377 is involved in G-protein-dependent but not beta-arrestin-dependent activation of the ERK pathway. Ubiquitinated. A basal ubiquitination seems not to be related to degradation. Ubiquitination is increased upon formation of OPRM1:OPRD1 oligomers leading to proteasomal degradation; the ubiquitination is diminished by RTP4. In terms of tissue distribution, expressed in brain. Isoform 16 and isoform 17 are detected in brain.

It localises to the cell membrane. It is found in the cell projection. The protein localises to the axon. Its subcellular location is the perikaryon. The protein resides in the dendrite. It localises to the endosome. It is found in the cytoplasm. Functionally, receptor for endogenous opioids such as beta-endorphin and endomorphin. Receptor for natural and synthetic opioids including morphine, heroin, DAMGO, fentanyl, etorphine, buprenorphin and methadone. Also activated by enkephalin peptides, such as Met-enkephalin or Met-enkephalin-Arg-Phe, with higher affinity for Met-enkephalin-Arg-Phe. Agonist binding to the receptor induces coupling to an inactive GDP-bound heterotrimeric G-protein complex and subsequent exchange of GDP for GTP in the G-protein alpha subunit leading to dissociation of the G-protein complex with the free GTP-bound G-protein alpha and the G-protein beta-gamma dimer activating downstream cellular effectors. The agonist- and cell type-specific activity is predominantly coupled to pertussis toxin-sensitive G(i) and G(o) G alpha proteins, GNAI1, GNAI2, GNAI3 and GNAO1 isoforms Alpha-1 and Alpha-2, and to a lesser extent to pertussis toxin-insensitive G alpha proteins GNAZ and GNA15. They mediate an array of downstream cellular responses, including inhibition of adenylate cyclase activity and both N-type and L-type calcium channels, activation of inward rectifying potassium channels, mitogen-activated protein kinase (MAPK), phospholipase C (PLC), phosphoinositide/protein kinase (PKC), phosphoinositide 3-kinase (PI3K) and regulation of NF-kappa-B. Also couples to adenylate cyclase stimulatory G alpha proteins. The selective temporal coupling to G-proteins and subsequent signaling can be regulated by RGSZ proteins, such as RGS9, RGS17 and RGS4. Phosphorylation by members of the GPRK subfamily of Ser/Thr protein kinases and association with beta-arrestins is involved in short-term receptor desensitization. Beta-arrestins associate with the GPRK-phosphorylated receptor and uncouple it from the G-protein thus terminating signal transduction. The phosphorylated receptor is internalized through endocytosis via clathrin-coated pits which involves beta-arrestins. The activation of the ERK pathway occurs either in a G-protein-dependent or a beta-arrestin-dependent manner and is regulated by agonist-specific receptor phosphorylation. Acts as a class A G-protein coupled receptor (GPCR) which dissociates from beta-arrestin at or near the plasma membrane and undergoes rapid recycling. Receptor down-regulation pathways are varying with the agonist and occur dependent or independent of G-protein coupling. Endogenous ligands induce rapid desensitization, endocytosis and recycling. Heterooligomerization with other GPCRs can modulate agonist binding, signaling and trafficking properties. Its function is as follows. Couples to GNAS and is proposed to be involved in excitatory effects. Does not bind agonists but may act through oligomerization with binding-competent OPRM1 isoforms and reduce their ligand binding activity. This is Mu-type opioid receptor (OPRM1) from Homo sapiens (Human).